A 541-amino-acid chain; its full sequence is Periplasmic oligopeptide-binding protein OppA (541 aa).

Residues 1 to 20 (MQHKLLFSAIALALSYSAQA) form the signal peptide.

Belongs to the bacterial solute-binding protein 5 family. As to quaternary structure, the complex is composed of two ATP-binding proteins (OppD and OppF), two transmembrane proteins (OppB and OppC) and a solute-binding protein (OppA).

It is found in the periplasm. Part of the ABC transporter complex OppABCDF involved in the uptake of oligopeptides. Plays an important nutritional role. Binds peptides containing from two to five amino acid residues. In Haemophilus influenzae (strain ATCC 51907 / DSM 11121 / KW20 / Rd), this protein is Periplasmic oligopeptide-binding protein OppA (oppA).